The following is a 75-amino-acid chain: MPHIDIKCFPRELDEQQKAALAADITDVIIRHLNSKDSSISIALQQIQPESWQAIWDAEIAPQMEALIKKPGYSM.

The active-site Proton acceptor; via imino nitrogen is P2.

Belongs to the 4-oxalocrotonate tautomerase family. PptA subfamily. Homodimer.

Its subcellular location is the cytoplasm. This chain is Tautomerase PptA, found in Escherichia coli O139:H28 (strain E24377A / ETEC).